The chain runs to 347 residues: DNA-directed RNA polymerase subunit alpha (347 aa).

An alpha N-terminal domain (alpha-NTD) region spans residues 1–243 (MLIKQGERLI…DQISVFINFD (243 aa)). The segment at 260–347 (VNEHLFKSID…EWKRKQQNEA (88 aa)) is alpha C-terminal domain (alpha-CTD).

Belongs to the RNA polymerase alpha chain family. Homodimer. The RNAP catalytic core consists of 2 alpha, 1 beta, 1 beta' and 1 omega subunit. When a sigma factor is associated with the core the holoenzyme is formed, which can initiate transcription.

It carries out the reaction RNA(n) + a ribonucleoside 5'-triphosphate = RNA(n+1) + diphosphate. DNA-dependent RNA polymerase catalyzes the transcription of DNA into RNA using the four ribonucleoside triphosphates as substrates. This chain is DNA-directed RNA polymerase subunit alpha, found in Desulfovibrio desulfuricans (strain ATCC 27774 / DSM 6949 / MB).